Here is a 375-residue protein sequence, read N- to C-terminus: Peptide-N(4)-(N-acetyl-beta-glucosaminyl)asparagine amidase (375 aa).

Positions 129, 132, 163, and 166 each coordinate Zn(2+). The active-site Nucleophile is the Cys-189. Catalysis depends on residues His-219 and Asp-236. Glu-239 provides a ligand contact to substrate. The segment at 345-375 is disordered; the sequence is KIEVSRTHNIPTGRQTGDAEWTKSRGEDGNE. The span at 364–375 shows a compositional bias: basic and acidic residues; it reads EWTKSRGEDGNE.

This sequence belongs to the transglutaminase-like superfamily. PNGase family. Zn(2+) serves as cofactor.

It localises to the cytoplasm. The enzyme catalyses Hydrolysis of an N(4)-(acetyl-beta-D-glucosaminyl)asparagine residue in which the glucosamine residue may be further glycosylated, to yield a (substituted) N-acetyl-beta-D-glucosaminylamine and a peptide containing an aspartate residue.. In terms of biological role, specifically deglycosylates the denatured form of N-linked glycoproteins in the cytoplasm and assists their proteasome-mediated degradation. Cleaves the beta-aspartyl-glucosamine (GlcNAc) of the glycan and the amide side chain of Asn, converting Asn to Asp. Prefers proteins containing high-mannose over those bearing complex type oligosaccharides. Can recognize misfolded proteins in the endoplasmic reticulum that are exported to the cytosol to be destroyed and deglycosylate them, while it has no activity toward native proteins. Deglycosylation is a prerequisite for subsequent proteasome-mediated degradation of some, but not all, misfolded glycoproteins. The sequence is that of Peptide-N(4)-(N-acetyl-beta-glucosaminyl)asparagine amidase (PNG1) from Debaryomyces hansenii (strain ATCC 36239 / CBS 767 / BCRC 21394 / JCM 1990 / NBRC 0083 / IGC 2968) (Yeast).